Reading from the N-terminus, the 274-residue chain is Orotidine 5'-phosphate decarboxylase (274 aa).

Lys-95 (proton donor) is an active-site residue.

The protein belongs to the OMP decarboxylase family. Type 2 subfamily.

It catalyses the reaction orotidine 5'-phosphate + H(+) = UMP + CO2. The protein operates within pyrimidine metabolism; UMP biosynthesis via de novo pathway; UMP from orotate: step 2/2. This chain is Orotidine 5'-phosphate decarboxylase, found in Variovorax paradoxus (strain S110).